We begin with the raw amino-acid sequence, 396 residues long: S-adenosylmethionine synthase 3 (396 aa).

E12 provides a ligand contact to Mg(2+). H18 is a binding site for ATP. E46 contacts K(+). Residues E59 and Q102 each contribute to the L-methionine site. Residues 170–172, 238–241, D249, 255–256, A272, K276, and K280 contribute to the ATP site; these read DGK, SGRF, and RK. D249 serves as a coordination point for L-methionine. K280 serves as a coordination point for L-methionine.

This sequence belongs to the AdoMet synthase family. As to quaternary structure, homotetramer. The cofactor is Mn(2+). Mg(2+) is required as a cofactor. It depends on Co(2+) as a cofactor. Requires K(+) as cofactor.

It is found in the cytoplasm. It carries out the reaction L-methionine + ATP + H2O = S-adenosyl-L-methionine + phosphate + diphosphate. Its pathway is amino-acid biosynthesis; S-adenosyl-L-methionine biosynthesis; S-adenosyl-L-methionine from L-methionine: step 1/1. Its function is as follows. Catalyzes the formation of S-adenosylmethionine from methionine and ATP. The reaction comprises two steps that are both catalyzed by the same enzyme: formation of S-adenosylmethionine (AdoMet) and triphosphate, and subsequent hydrolysis of the triphosphate. The polypeptide is S-adenosylmethionine synthase 3 (METK3) (Oryza sativa subsp. japonica (Rice)).